We begin with the raw amino-acid sequence, 334 residues long: D-alanine--D-alanine ligase (334 aa).

In terms of domain architecture, ATP-grasp spans Lys-124–Leu-329. Position 154-209 (Ala-154–Glu-209) interacts with ATP. Residues Asp-283, Glu-296, and Asn-298 each contribute to the Mg(2+) site.

The protein belongs to the D-alanine--D-alanine ligase family. The cofactor is Mg(2+). Requires Mn(2+) as cofactor.

It localises to the cytoplasm. It carries out the reaction 2 D-alanine + ATP = D-alanyl-D-alanine + ADP + phosphate + H(+). It participates in cell wall biogenesis; peptidoglycan biosynthesis. Cell wall formation. This chain is D-alanine--D-alanine ligase, found in Shewanella pealeana (strain ATCC 700345 / ANG-SQ1).